A 287-amino-acid polypeptide reads, in one-letter code: ATP synthase gamma chain (287 aa).

It belongs to the ATPase gamma chain family. As to quaternary structure, F-type ATPases have 2 components, CF(1) - the catalytic core - and CF(0) - the membrane proton channel. CF(1) has five subunits: alpha(3), beta(3), gamma(1), delta(1), epsilon(1). CF(0) has three main subunits: a, b and c.

It is found in the cell inner membrane. Functionally, produces ATP from ADP in the presence of a proton gradient across the membrane. The gamma chain is believed to be important in regulating ATPase activity and the flow of protons through the CF(0) complex. The polypeptide is ATP synthase gamma chain (Yersinia enterocolitica serotype O:8 / biotype 1B (strain NCTC 13174 / 8081)).